We begin with the raw amino-acid sequence, 222 residues long: Thiopurine S-methyltransferase (222 aa).

Residues Trp10, Leu45, Glu66, and Arg123 each contribute to the S-adenosyl-L-methionine site.

The protein belongs to the class I-like SAM-binding methyltransferase superfamily. TPMT family.

It is found in the cytoplasm. It carries out the reaction S-adenosyl-L-methionine + a thiopurine = S-adenosyl-L-homocysteine + a thiopurine S-methylether.. This chain is Thiopurine S-methyltransferase, found in Pseudomonas fluorescens (strain ATCC BAA-477 / NRRL B-23932 / Pf-5).